Reading from the N-terminus, the 174-residue chain is Zinc finger AN1 domain-containing stress-associated protein 15 (174 aa).

A disordered region spans residues 1-61; the sequence is MAQESCDLNK…TPPAAAAAAS (61 aa). The span at 18–41 shows a compositional bias: low complexity; the sequence is PSSSSSPSPSPTTASPSPPTAQMT. Residues 42-54 show a composition bias toward pro residues; that stretch reads EPPPPQSTPPTPP. Residues 109–155 form an AN1-type zinc finger; that stretch reads VLFVNRCNVCRKRVGLTGFRCRCGELFCPRHRHSETHECSFDYKTAG. Zn(2+) is bound by residues cysteine 115, cysteine 118, cysteine 129, cysteine 131, cysteine 136, histidine 139, histidine 145, and cysteine 147.

Its function is as follows. May be involved in environmental stress response. This chain is Zinc finger AN1 domain-containing stress-associated protein 15 (SAP15), found in Oryza sativa subsp. japonica (Rice).